Here is a 505-residue protein sequence, read N- to C-terminus: Glutamate--tRNA ligase (505 aa).

Positions 12–22 (PSPTGALHIGG) match the 'HIGH' region motif. Positions 260–264 (KLSKR) match the 'KMSKS' region motif. Lysine 263 contacts ATP.

It belongs to the class-I aminoacyl-tRNA synthetase family. Glutamate--tRNA ligase type 1 subfamily. Monomer.

It is found in the cytoplasm. The enzyme catalyses tRNA(Glu) + L-glutamate + ATP = L-glutamyl-tRNA(Glu) + AMP + diphosphate. Catalyzes the attachment of glutamate to tRNA(Glu) in a two-step reaction: glutamate is first activated by ATP to form Glu-AMP and then transferred to the acceptor end of tRNA(Glu). The chain is Glutamate--tRNA ligase from Phocaeicola vulgatus (strain ATCC 8482 / DSM 1447 / JCM 5826 / CCUG 4940 / NBRC 14291 / NCTC 11154) (Bacteroides vulgatus).